We begin with the raw amino-acid sequence, 315 residues long: Ribosomal protein L11 methyltransferase (315 aa).

T163, G184, D206, and N248 together coordinate S-adenosyl-L-methionine.

Belongs to the methyltransferase superfamily. PrmA family.

It is found in the cytoplasm. It catalyses the reaction L-lysyl-[protein] + 3 S-adenosyl-L-methionine = N(6),N(6),N(6)-trimethyl-L-lysyl-[protein] + 3 S-adenosyl-L-homocysteine + 3 H(+). Functionally, methylates ribosomal protein L11. This chain is Ribosomal protein L11 methyltransferase, found in Lacticaseibacillus paracasei (strain ATCC 334 / BCRC 17002 / CCUG 31169 / CIP 107868 / KCTC 3260 / NRRL B-441) (Lactobacillus paracasei).